A 190-amino-acid chain; its full sequence is Dynein axonemal light chain 1 (190 aa).

LRR repeat units lie at residues 49–70 (VCEK…NGLK), 71–92 (NLKI…EAVG), 94–115 (SLEE…HVLK), and 116–137 (KLKV…NKLQ). Residues 150–190 (NPLEEKHSAEGDWQDRVTKSLKALKKLDGTPIIKNDEEEED) form the LRRCT domain.

It belongs to the dynein light chain LC1-type family. Interacts with DNAH5, a outer arm dynein heavy chain. Interacts with tubulin located within the A-tubule of the outer doublets in a ATP-independent manner.

The protein resides in the cytoplasm. The protein localises to the cytoskeleton. Its subcellular location is the cilium axoneme. Part of the multisubunit axonemal ATPase complexes that generate the force for cilia motility and govern beat frequency. Component of the outer arm dynein (ODA). May be involved in a mechanosensory feedback mechanism controlling ODA activity based on external conformational cues by tethering the outer arm dynein heavy chain (DNAH5) to the microtubule within the axoneme. In Ciona intestinalis (Transparent sea squirt), this protein is Dynein axonemal light chain 1 (DNAL1).